The primary structure comprises 432 residues: Adenylosuccinate synthetase 2 (432 aa).

Residues 13-19 (GDEGKGK) and 41-43 (GHT) each bind GTP. Asp-14 acts as the Proton acceptor in catalysis. Mg(2+)-binding residues include Asp-14 and Gly-41. IMP contacts are provided by residues 14 to 17 (DEGK), 39 to 42 (NAGH), Thr-130, Arg-144, Gln-225, Thr-240, and Arg-304. The active-site Proton donor is His-42. Residue 300–306 (ATTGRSR) coordinates substrate. Residues Arg-306, 332–334 (KLD), and 415–417 (STG) each bind GTP.

This sequence belongs to the adenylosuccinate synthetase family. In terms of assembly, homodimer. Requires Mg(2+) as cofactor.

It localises to the cytoplasm. The enzyme catalyses IMP + L-aspartate + GTP = N(6)-(1,2-dicarboxyethyl)-AMP + GDP + phosphate + 2 H(+). The protein operates within purine metabolism; AMP biosynthesis via de novo pathway; AMP from IMP: step 1/2. Its function is as follows. Plays an important role in the de novo pathway of purine nucleotide biosynthesis. Catalyzes the first committed step in the biosynthesis of AMP from IMP. In Photorhabdus laumondii subsp. laumondii (strain DSM 15139 / CIP 105565 / TT01) (Photorhabdus luminescens subsp. laumondii), this protein is Adenylosuccinate synthetase 2.